A 116-amino-acid chain; its full sequence is Nicotine metabolites export pump subunit NepA (116 aa).

4 consecutive transmembrane segments (helical) span residues 10-30, 42-62, 67-87, and 92-112; these read LTIWPLLLLAIAAEVAATSLL, TVAVACLYTVAFALLAQILKF, IAYALWAGLGTASVAVIGVLF, and FSWKHAIGLALVVTGVVTLNL.

The protein belongs to the drug/metabolite transporter (DMT) superfamily. Small multidrug resistance (SMR) (TC 2.A.7.1) family. NepA/NepB subfamily. The efflux pump is composed of NepA and NepB.

Its subcellular location is the cell membrane. Component of an efflux pump responsible for the transport of nicotine breakdown products, in particular methylamine, out of the cell. This pump apparently serves as a metabolic valve for nicotine catabolites and may protect the bacteria from the potentially toxic side effects of these compounds. The polypeptide is Nicotine metabolites export pump subunit NepA (nepA) (Paenarthrobacter nicotinovorans (Arthrobacter nicotinovorans)).